Consider the following 373-residue polypeptide: Sterol-4-alpha-carboxylate 3-dehydrogenase, decarboxylating (373 aa).

Methionine 1 is modified (N-acetylmethionine). Threonine 22 carries the post-translational modification Phosphothreonine. The active-site Proton acceptor is tyrosine 172. Residue lysine 176 coordinates NAD(+). Residues 298 to 318 traverse the membrane as a helical segment; that stretch reads WVAYYLALLLSLLVMVISPVI. Positions 370–373 match the Prevents secretion from ER motif; it reads RRVK.

Belongs to the 3-beta-HSD family. In terms of assembly, homodimer. As to expression, brain, heart, liver, lung, kidney, skin and placenta.

The protein localises to the endoplasmic reticulum membrane. The protein resides in the lipid droplet. The enzyme catalyses a 3beta-hydroxysteroid-4alpha-carboxylate + NADP(+) = a 3-oxosteroid + CO2 + NADPH. The catalysed reaction is a 3beta-hydroxysteroid-4alpha-carboxylate + NAD(+) = a 3-oxosteroid + CO2 + NADH. It carries out the reaction 4alpha-carboxyzymosterol + NADP(+) = zymosterone + CO2 + NADPH. It catalyses the reaction 4alpha-carboxy-4beta-methyl-5alpha-cholest-8-en-3beta-ol + NADP(+) = 4alpha-methyl-5alpha-cholest-8-en-3-one + CO2 + NADPH. The enzyme catalyses 4alpha-carboxy-5alpha-cholest-8-ene-3beta-ol + NADP(+) = 5alpha-cholest-8-en-3-one + CO2 + NADPH. The catalysed reaction is 4beta-methylzymosterol-4alpha-carboxylate + NADP(+) = 3-dehydro-4-methylzymosterol + CO2 + NADPH. It carries out the reaction 4beta-methylzymosterol-4alpha-carboxylate + NAD(+) = 3-dehydro-4-methylzymosterol + CO2 + NADH. It catalyses the reaction 4alpha-carboxy-5alpha-cholest-8-ene-3beta-ol + NAD(+) = 5alpha-cholest-8-en-3-one + CO2 + NADH. The enzyme catalyses 4alpha-carboxy-4beta-methyl-5alpha-cholest-8-en-3beta-ol + NAD(+) = 4alpha-methyl-5alpha-cholest-8-en-3-one + CO2 + NADH. The catalysed reaction is 4alpha-carboxyzymosterol + NAD(+) = zymosterone + CO2 + NADH. It functions in the pathway steroid biosynthesis; zymosterol biosynthesis; zymosterol from lanosterol: step 4/6. Functionally, catalyzes the NAD(P)(+)-dependent oxidative decarboxylation of the C4 methyl groups of 4-alpha-carboxysterols in post-squalene cholesterol biosynthesis. Also plays a role in the regulation of the endocytic trafficking of EGFR. The sequence is that of Sterol-4-alpha-carboxylate 3-dehydrogenase, decarboxylating (NSDHL) from Homo sapiens (Human).